The following is a 268-amino-acid chain: Ribosomal RNA small subunit methyltransferase A (268 aa).

S-adenosyl-L-methionine is bound by residues asparagine 12, leucine 14, glycine 38, glutamate 59, aspartate 82, and asparagine 107.

Belongs to the class I-like SAM-binding methyltransferase superfamily. rRNA adenine N(6)-methyltransferase family. RsmA subfamily.

It is found in the cytoplasm. The enzyme catalyses adenosine(1518)/adenosine(1519) in 16S rRNA + 4 S-adenosyl-L-methionine = N(6)-dimethyladenosine(1518)/N(6)-dimethyladenosine(1519) in 16S rRNA + 4 S-adenosyl-L-homocysteine + 4 H(+). Specifically dimethylates two adjacent adenosines (A1518 and A1519) in the loop of a conserved hairpin near the 3'-end of 16S rRNA in the 30S particle. May play a critical role in biogenesis of 30S subunits. This is Ribosomal RNA small subunit methyltransferase A from Onion yellows phytoplasma (strain OY-M).